A 192-amino-acid polypeptide reads, in one-letter code: Rho-related protein racC (192 aa).

Position 13–20 (13–20) interacts with GTP; the sequence is GDGAVGKT. An Effector region motif is present at residues 35–43; the sequence is YIPTVFDNY. GTP contacts are provided by residues 60–64 and 118–121; these read DTAGQ and TKLD. C189 carries the cysteine methyl ester modification. C189 carries the S-geranylgeranyl cysteine lipid modification. Positions 190–192 are cleaved as a propeptide — removed in mature form; that stretch reads IVM.

This sequence belongs to the small GTPase superfamily. Rho family. Interacts with pakB.

The protein resides in the cell membrane. The polypeptide is Rho-related protein racC (racC) (Dictyostelium discoideum (Social amoeba)).